The chain runs to 132 residues: ATP synthase epsilon chain (132 aa).

The protein belongs to the ATPase epsilon chain family. In terms of assembly, F-type ATPases have 2 components, CF(1) - the catalytic core - and CF(0) - the membrane proton channel. CF(1) has five subunits: alpha(3), beta(3), gamma(1), delta(1), epsilon(1). CF(0) has three main subunits: a, b and c.

Its subcellular location is the cell membrane. Its function is as follows. Produces ATP from ADP in the presence of a proton gradient across the membrane. The polypeptide is ATP synthase epsilon chain (atpC) (Geobacillus stearothermophilus (Bacillus stearothermophilus)).